The following is a 360-amino-acid chain: Probable dual-specificity RNA methyltransferase RlmN (360 aa).

Glu-91 acts as the Proton acceptor in catalysis. The region spanning 97 to 335 (QHYGQSVCVT…CVVRQEHGTD (239 aa)) is the Radical SAM core domain. Cys-104 and Cys-340 are oxidised to a cystine. [4Fe-4S] cluster-binding residues include Cys-111, Cys-115, and Cys-118. S-adenosyl-L-methionine is bound by residues 163-164 (GE), Ser-195, 218-220 (SLH), and Asn-296. Cys-340 acts as the S-methylcysteine intermediate in catalysis.

The protein belongs to the radical SAM superfamily. RlmN family. The cofactor is [4Fe-4S] cluster.

The protein resides in the cytoplasm. The catalysed reaction is adenosine(2503) in 23S rRNA + 2 reduced [2Fe-2S]-[ferredoxin] + 2 S-adenosyl-L-methionine = 2-methyladenosine(2503) in 23S rRNA + 5'-deoxyadenosine + L-methionine + 2 oxidized [2Fe-2S]-[ferredoxin] + S-adenosyl-L-homocysteine. The enzyme catalyses adenosine(37) in tRNA + 2 reduced [2Fe-2S]-[ferredoxin] + 2 S-adenosyl-L-methionine = 2-methyladenosine(37) in tRNA + 5'-deoxyadenosine + L-methionine + 2 oxidized [2Fe-2S]-[ferredoxin] + S-adenosyl-L-homocysteine. Functionally, specifically methylates position 2 of adenine 2503 in 23S rRNA and position 2 of adenine 37 in tRNAs. This Streptococcus equi subsp. zooepidemicus (strain MGCS10565) protein is Probable dual-specificity RNA methyltransferase RlmN.